We begin with the raw amino-acid sequence, 246 residues long: Acetoacetate decarboxylase (246 aa).

The active-site Schiff-base intermediate with acetoacetate is Lys-116.

The protein belongs to the ADC family.

The enzyme catalyses acetoacetate + H(+) = acetone + CO2. Catalyzes the conversion of acetoacetate to acetone and carbon dioxide. The polypeptide is Acetoacetate decarboxylase (Burkholderia cenocepacia (strain ATCC BAA-245 / DSM 16553 / LMG 16656 / NCTC 13227 / J2315 / CF5610) (Burkholderia cepacia (strain J2315))).